Reading from the N-terminus, the 337-residue chain is MSSKKNFEVGENVACIYKGKPYDAKITDIKTNSDGKELYCVHFKGWNNRYDEKIPVGEEKDRIFKGTASEYAEKHNAELPTTALKPKKKSLAAEAPRDDRDDTPGTSKGKKAKSVTIAPVMTADDMKVELPKPLRKILIDDYDLVCRYFINIVPHEYSVDQIIEDYIKTIPVSNEQMRTVDDLLIEYEEADIKITNLALICTARGLVDYFNVTLGSSYQLLYKFERPQYNDLVKKRAMEKGIDITNPTALQDSGFRPSQEYGIVHFLRMLAKLPDYLKLTQWNDHVINRIMIGVHDLIVFLNKNHGKYYRGSSDYQGASNDYYRRSLAADDGVGANQ.

In terms of domain architecture, Tudor-knot spans 7–55 (FEVGENVACIYKGKPYDAKITDIKTNSDGKELYCVHFKGWNNRYDEKIP). Residues 75 to 113 (HNAELPTTALKPKKKSLAAEAPRDDRDDTPGTSKGKKAK) are disordered. Residues 122 to 327 (TADDMKVELP…ASNDYYRRSL (206 aa)) enclose the MRG domain.

Component of the SIN3S complex, which contains at least sin-3, hda-1, athp-1 and mrg-1. Interacts with cfp-1, a component of the SET2 complex. Interacts with rfp-1. Expressed in oocytes (at protein level). Expressed mainly in germ cells, but also at lower levels in several somatic cell types, including intestinal cells.

Its subcellular location is the nucleus. The protein resides in the chromosome. Its function is as follows. Protein involved in the remodeling of chromatin thereby regulating various processes including transcription, chromosome synapsis and genome integrity. Mainly binds genomic loci carrying trimethylated histone H3 'Lys-36' (H3K36me3) or 'Lys-4' (H3K4me3), and acetylated histone H3 'Lys-9' (H3K9ac), 'Lys-27' (H3K27ac). During meiosis, required for the presynaptic pairing of homologous chromosomal regions outside of the pairing center and for the progression of chromosome synapsis. Essential maternal factor required in postembryonic germline development and in maintaining germ cell identity. Plays an important role in maintaining genomic integrity in primordial germ cells (PGCs) during meiosis by regulating DNA double-strand break (DSB) repair and synapsis. Also, required for chromatin-based transcriptional silencing in PGCs and for silencing of X-linked genes in the maternal germ line. By retaining histone acetyltransferase, cbp-1, in euchromatin, promotes the anchoring of heterochromatin at the inner nuclear membrane in intestinal and hypodermal cells. In Caenorhabditis elegans, this protein is Mortality factor related protein 1.